The chain runs to 627 residues: Glutamine--fructose-6-phosphate aminotransferase [isomerizing] (627 aa).

The Nucleophile; for GATase activity role is filled by Cys-2. The region spanning Cys-2–Leu-224 is the Glutamine amidotransferase type-2 domain. 2 consecutive SIS domains span residues Leu-293–Thr-442 and Leu-476–Pro-617. The For Fru-6P isomerization activity role is filled by Lys-622.

As to quaternary structure, homodimer.

Its subcellular location is the cytoplasm. It carries out the reaction D-fructose 6-phosphate + L-glutamine = D-glucosamine 6-phosphate + L-glutamate. Its function is as follows. Catalyzes the first step in hexosamine metabolism, converting fructose-6P into glucosamine-6P using glutamine as a nitrogen source. In Nostoc sp. (strain PCC 9229), this protein is Glutamine--fructose-6-phosphate aminotransferase [isomerizing].